We begin with the raw amino-acid sequence, 290 residues long: MADSKMLVPELNDAETMGAETSRFEELLLQASKELQQAQTSRPESTQIQPQPGFCIKTNSAEGKVFINICHSPSIPPPADLTEDELLQMLEEDQAGFRIPMSLGEPHAELDAKGQGCTAYDVAVNSDFFRRMQNSDFLRELVITIAREGLEDKYGLQLNPEWRILKNRPFLGSISQQNIRSQQRPRIQELGNLHTPSSPRPEAGPEKPHLSLWLEAPDLLLAEIDLPKLDGALGLSLEVGENRLVMGGPQQLYHLDTYIPLRINCDESKAAFHQKRKQLMVAMPLLSVPS.

Over residues 34 to 50 (ELQQAQTSRPESTQIQP) the composition is skewed to polar residues. A disordered region spans residues 34 to 53 (ELQQAQTSRPESTQIQPQPG). Serine 173 carries the phosphoserine modification.

This sequence belongs to the PIH1 family. As to quaternary structure, component of the R2TP complex composed at least of RUVBL1, RUVBL2, RPAP3 and PIHD1. Component of the PAQosome complex which is responsible for the biogenesis of several protein complexes and which consists of R2TP complex members RUVBL1, RUVBL2, RPAP3 and PIH1D1, URI complex members PFDN2, PFDN6, PDRG1, UXT and URI1 as well as ASDURF, POLR2E and DNAAF10/WDR92. Interacts with phosphorylated TELO2 and mediates interaction of TELO2 with the R2TP complex. Interacts with phosphorylated ECD, EFTUD2/SNRP116, RPB1 and UBR5 and with RPB1 in a phosphorylation-independent manner. Interacts with the core C/D box snoRNP particle components NOP58 and FBL and with RUVBL1/TIP49. Interacts with RPAP3 and DNAAF10. Interacts with histone H4 and with SWI/SNF complex member SMARCB1/SNF5. Interacts with the mTORC1 complex member RPTOR. Interacts with MSL1.

The protein localises to the nucleus. Involved in the assembly of C/D box small nucleolar ribonucleoprotein (snoRNP) particles. Recruits the SWI/SNF complex to the core promoter of rRNA genes and enhances pre-rRNA transcription. Mediates interaction of TELO2 with the R2TP complex which is necessary for the stability of MTOR and SMG1. Positively regulates the assembly and activity of the mTORC1 complex. This Bos taurus (Bovine) protein is PIH1 domain-containing protein 1 (PIH1D1).